Reading from the N-terminus, the 670-residue chain is Solute carrier organic anion transporter family member 1A6 (670 aa).

Residues 1-20 (MGEPEKRAGTHGIRCFAKIK) lie on the Cytoplasmic side of the membrane. Residues 21–40 (VFLLALTWAYASKALSATYM) traverse the membrane as a helical segment. Residues 41-59 (NSMLTQIERRFNISTSIVG) lie on the Extracellular side of the membrane. Asn52 carries an N-linked (GlcNAc...) asparagine glycan. The helical transmembrane segment at 60-80 (LINGSFEVGNLLLIIFVSYFG) threads the bilayer. Residues 81–86 (RKRHRP) lie on the Cytoplasmic side of the membrane. The chain crosses the membrane as a helical span at residues 87–111 (IMIGIGCAVMGLGCFIISLPHFLMG). The Extracellular segment spans residues 112–155 (RYEYETTISPTSNLSSNSFLCMENRTQTLKPTQDPAECVKEMKS). Asn124 and Asn135 each carry an N-linked (GlcNAc...) asparagine glycan. Residues 156–184 (LMWIYVLVGNIIRGIGETPIMPLGISYIE) form a helical membrane-spanning segment. The Cytoplasmic segment spans residues 185–203 (DFAKSENSPFYIGILEVGK). A helical transmembrane segment spans residues 204 to 224 (ITGPIAAIWLGSFCATIYVDM). Residues 225–242 (GSVNTDDLTITPTDTRCV) lie on the Extracellular side of the membrane. A helical membrane pass occupies residues 243–267 (GAWWIGFLVCAGLNILISIPFFFFP). Topologically, residues 268-311 (KTFPKEGPEDMANETKNDEGDKHREKAKEEKRGITKDFFLFMKS) are cytoplasmic. A disordered region spans residues 276–295 (EDMANETKNDEGDKHREKAK). Residues 312 to 333 (LSCNPIYMLCVLTSVLQVNGFV) form a helical membrane-spanning segment. The Extracellular portion of the chain corresponds to 334-353 (SIFTFKPKYLEHHYGKSSSE). The chain crosses the membrane as a helical span at residues 354–377 (AIFLMGLYTLPSVCVGYLISGFIM). Residues 378 to 381 (KKFK) are Cytoplasmic-facing. A helical transmembrane segment spans residues 382-405 (ITLKKAAFISYCLGMSECLLSLCN). The Extracellular segment spans residues 406-513 (FMLTCDNVPI…PDCANKLQYF (108 aa)). The Kazal-like domain maps to 433 to 488 (NTVLADCNTRCSCLTKTWDPVCGDNGLAYITPCLAGCEKSVGSGINMVLQDCSCIQ). 3 disulfides stabilise this stretch: Cys439–Cys469, Cys445–Cys465, and Cys454–Cys486. Asn492 carries an N-linked (GlcNAc...) asparagine glycan. The chain crosses the membrane as a helical span at residues 514–536 (LIITVFCSFFYSLSLIPGYMIFL). Topologically, residues 537 to 545 (RCMKSEEKS) are cytoplasmic. The helical transmembrane segment at 546 to 571 (LGIGLQAFCMRILGGILAPIYFGVLI) threads the bilayer. Topologically, residues 572–605 (DRTCLHWGTQKCGEPGACRTYEINSFRSIYLGLP) are extracellular. Residues 606–623 (AALRGSSYLPAFFILRLM) form a helical membrane-spanning segment. Residues 624–670 (RKFQFPGDINSPVTDHVEMMLTEKESEHTDVHRSPQVENDGELKTKL) lie on the Cytoplasmic side of the membrane. Ser634 is modified (phosphoserine). The segment at 647-670 (KESEHTDVHRSPQVENDGELKTKL) is disordered.

The protein belongs to the organo anion transporter (TC 2.A.60) family.

The protein localises to the cell membrane. Its function is as follows. May mediate the Na(+)-independent transport of organic anions. This chain is Solute carrier organic anion transporter family member 1A6 (Slco1a6), found in Rattus norvegicus (Rat).